The primary structure comprises 146 residues: Horcolin (146 aa).

The tract at residues 1-21 (MSKPVKIGPWGGNGGSERDVQ) is disordered. One can recognise a Jacalin-type lectin domain in the interval 4 to 146 (PVKIGPWGGN…LDAIGFYITP (143 aa)).

Belongs to the jacalin lectin family.

Its subcellular location is the secreted. It is found in the extracellular space. The protein resides in the apoplast. Functionally, mannose-specific lectin. Has a weak agglutinating activity against rabbit erythrocytes. This Hordeum vulgare (Barley) protein is Horcolin.